Consider the following 95-residue polypeptide: EFRFVRWHDVSTDVLPAGGSKAEGIRLMIEKLGIDKGDVYAFGDGLNDIEMLSFVGTGVAMGNAHEEVKRVADFVTKPVSEEGIWHGLKQLQLIP.

Lys21 is a phosphate binding site. Residue Asp44 coordinates Mg(2+). Phosphate is bound at residue Asn47.

Belongs to the HAD-like hydrolase superfamily. Cof family. Mg(2+) serves as cofactor.

This is an uncharacterized protein from Geobacillus stearothermophilus (Bacillus stearothermophilus).